A 132-amino-acid polypeptide reads, in one-letter code: UPF0299 membrane protein KPN78578_25390 (132 aa).

The next 4 membrane-spanning stretches (helical) occupy residues 5-25 (LTII…LYAG), 38-60 (GSII…PQWV), 66-86 (ILIR…MQYW), and 93-113 (LGPV…VVSW).

This sequence belongs to the UPF0299 family.

It is found in the cell inner membrane. The sequence is that of UPF0299 membrane protein KPN78578_25390 from Klebsiella pneumoniae subsp. pneumoniae (strain ATCC 700721 / MGH 78578).